The chain runs to 137 residues: Holo-[acyl-carrier-protein] synthase (137 aa).

Mg(2+) is bound by residues Asp8 and Glu57.

Belongs to the P-Pant transferase superfamily. AcpS family. Mg(2+) is required as a cofactor.

The protein resides in the cytoplasm. It carries out the reaction apo-[ACP] + CoA = holo-[ACP] + adenosine 3',5'-bisphosphate + H(+). In terms of biological role, transfers the 4'-phosphopantetheine moiety from coenzyme A to a Ser of acyl-carrier-protein. This chain is Holo-[acyl-carrier-protein] synthase, found in Cereibacter sphaeroides (strain ATCC 17029 / ATH 2.4.9) (Rhodobacter sphaeroides).